We begin with the raw amino-acid sequence, 239 residues long: 4-hydroxy-tetrahydrodipicolinate reductase (239 aa).

NAD(+)-binding positions include 12–17 (GASGRM), 94–96 (GTT), and 118–121 (ASNF). His150 acts as the Proton donor/acceptor in catalysis. Residue His151 participates in (S)-2,3,4,5-tetrahydrodipicolinate binding. Lys154 functions as the Proton donor in the catalytic mechanism. 160–161 (GT) lines the (S)-2,3,4,5-tetrahydrodipicolinate pocket.

The protein belongs to the DapB family.

It is found in the cytoplasm. The catalysed reaction is (S)-2,3,4,5-tetrahydrodipicolinate + NAD(+) + H2O = (2S,4S)-4-hydroxy-2,3,4,5-tetrahydrodipicolinate + NADH + H(+). The enzyme catalyses (S)-2,3,4,5-tetrahydrodipicolinate + NADP(+) + H2O = (2S,4S)-4-hydroxy-2,3,4,5-tetrahydrodipicolinate + NADPH + H(+). Its pathway is amino-acid biosynthesis; L-lysine biosynthesis via DAP pathway; (S)-tetrahydrodipicolinate from L-aspartate: step 4/4. Functionally, catalyzes the conversion of 4-hydroxy-tetrahydrodipicolinate (HTPA) to tetrahydrodipicolinate. The chain is 4-hydroxy-tetrahydrodipicolinate reductase from Stenotrophomonas maltophilia (strain R551-3).